Here is a 352-residue protein sequence, read N- to C-terminus: Inorganic triphosphatase (352 aa).

The CYTH domain maps to 6-203 (LQEIELKLAI…KRGYLLGSKQ (198 aa)).

The enzyme catalyses triphosphate + H2O = phosphate + diphosphate. In terms of biological role, involved in the hydrolysis of the beta-gamma-phosphoanhydride linkage of triphosphate-containing substrates (inorganic or nucleoside-linked). Catalyzes the hydrolysis of inorganic triphosphate (PPPi), which could be cytotoxic because of its high affinity for calcium ion, thereby interfering with calcium signaling. The protein is Inorganic triphosphatase of Haemophilus influenzae (strain ATCC 51907 / DSM 11121 / KW20 / Rd).